The following is a 338-amino-acid chain: MTTLRLLISDSYDPWFNLAVEECIFRQMPATQRVLFLWRNADTVVIGRAQNPWKECNTRRMEEDNVRLARRSSGGGAVFHDLGNTCFTFMAGKPEYDKTISTHIVLAALNSLGVMADASGRNDLVVKTPDGDRKVSGSAYRETKDRGFHHGTLLLNADLSRLANYLNPDKKKLAAKGITSVRSRVANLTKLLPGITHQQVCQAVTEAFFAHYGERVDAEVISPDKTPDLPNFAETFARQSSWEWNFGQAPAFSHLLDERFTWGGVELHFDVEKGHITRAQVFTDSLNPAPLEALAGRLQGCLYRADKLQETCEALIATFPEQESELRELASWVAGAVR.

Residues Pro-29–Val-216 form the BPL/LPL catalytic domain. ATP is bound by residues Arg-71, Gly-76–Phe-79, and Lys-134. Lys-134 serves as a coordination point for (R)-lipoate.

The protein belongs to the LplA family. Monomer.

It localises to the cytoplasm. The enzyme catalyses L-lysyl-[lipoyl-carrier protein] + (R)-lipoate + ATP = N(6)-[(R)-lipoyl]-L-lysyl-[lipoyl-carrier protein] + AMP + diphosphate + H(+). It functions in the pathway protein modification; protein lipoylation via exogenous pathway; protein N(6)-(lipoyl)lysine from lipoate: step 1/2. Its pathway is protein modification; protein lipoylation via exogenous pathway; protein N(6)-(lipoyl)lysine from lipoate: step 2/2. Functionally, catalyzes both the ATP-dependent activation of exogenously supplied lipoate to lipoyl-AMP and the transfer of the activated lipoyl onto the lipoyl domains of lipoate-dependent enzymes. The polypeptide is Lipoate-protein ligase A (Salmonella schwarzengrund (strain CVM19633)).